We begin with the raw amino-acid sequence, 1216 residues long: Histone-lysine N-methyltransferase SETDB1-B (1216 aa).

A coiled-coil region spans residues 38 to 61 (KADLEQLQEWVEQREKEVADIDAL). Tudor domains lie at 266-329 (RLFV…LKKT) and 356-412 (LLKP…NLKM). A disordered region spans residues 417 to 513 (SQEKKMAGQQ…QGMPSDLQPK (97 aa)). The span at 467 to 478 (PVAPQPAGPPQP) shows a compositional bias: pro residues. The span at 482-498 (ESPSFKSQMAKKSTGQL) shows a compositional bias: polar residues. The MBD domain occupies 595-666 (HRGRNPLLTP…EMFCLDPYVL (72 aa)). Positions 728 to 801 (VGCDCTDGCR…MCTNRLVQHG (74 aa)) constitute a Pre-SET domain. Residues cysteine 730, cysteine 732, cysteine 736, cysteine 742, cysteine 744, cysteine 782, cysteine 786, cysteine 788, and cysteine 793 each coordinate Zn(2+). In terms of domain architecture, SET spans 804–1179 (VRLQLFKTQN…AGTELTWDYN (376 aa)). S-adenosyl-L-methionine contacts are provided by residues 814-816 (KGW), aspartate 852, and tyrosine 854. 3 disordered regions span residues 892–944 (LPAS…DTFV), 961–1057 (RRQA…KTQA), and 1081–1108 (KSGG…NGPK). Over residues 918 to 940 (DSSEESDDEKDDDSNEDDSDSSD) the composition is skewed to acidic residues. 2 stretches are compositionally biased toward basic and acidic residues: residues 966–976 (GLKEESQDSKD) and 983–997 (GEDR…ETGK). Residues 1003–1016 (WLTNQSSTSANQSV) show a composition bias toward polar residues. 2 stretches are compositionally biased toward basic and acidic residues: residues 1020-1029 (GGIKTEKKDV) and 1046-1055 (DDNKEREKKT). Residues 1082 to 1105 (SGGGGAGGGGSGPSHGHGGGGGDN) are compositionally biased toward gly residues. Residues arginine 1133 and 1136-1137 (NH) contribute to the S-adenosyl-L-methionine site. Zn(2+) is bound by residues cysteine 1139, cysteine 1192, cysteine 1194, and cysteine 1199. One can recognise a Post-SET domain in the interval 1188-1204 (KELLCCCGSTECRGRLL).

This sequence belongs to the class V-like SAM-binding methyltransferase superfamily. Histone-lysine methyltransferase family. Suvar3-9 subfamily.

It localises to the nucleus. The protein resides in the chromosome. It catalyses the reaction L-lysyl(4)-[histone H3] + 3 S-adenosyl-L-methionine = N(6),N(6),N(6)-trimethyl-L-lysyl(4)-[histone H3] + 3 S-adenosyl-L-homocysteine + 3 H(+). Functionally, histone methyltransferase that specifically trimethylates 'Lys-9' of histone H3. H3 'Lys-9' trimethylation represents a specific tag for epigenetic transcriptional repression by recruiting HP1 (CBX1, CBX3 and/or CBX5) proteins to methylated histones. Mainly functions in euchromatin regions, thereby playing a central role in the silencing of euchromatic genes. H3 'Lys-9' trimethylation is coordinated with DNA methylation. Plays a role in promoter hypermethylation and transcriptional silencing of tumor suppressor genes (TSGs) or other tumor-related genes. Also required to maintain a transcriptionally repressive state of genes in undifferentiated embryonic stem cells (ESCs). Associates at promoter regions of tumor suppressor genes (TSGs) leading to their gene silencing. In Danio rerio (Zebrafish), this protein is Histone-lysine N-methyltransferase SETDB1-B (setdb1b).